A 368-amino-acid polypeptide reads, in one-letter code: Histidinol-phosphate aminotransferase (368 aa).

N6-(pyridoxal phosphate)lysine is present on Lys228.

It belongs to the class-II pyridoxal-phosphate-dependent aminotransferase family. Histidinol-phosphate aminotransferase subfamily. Homodimer. It depends on pyridoxal 5'-phosphate as a cofactor.

The catalysed reaction is L-histidinol phosphate + 2-oxoglutarate = 3-(imidazol-4-yl)-2-oxopropyl phosphate + L-glutamate. It participates in amino-acid biosynthesis; L-histidine biosynthesis; L-histidine from 5-phospho-alpha-D-ribose 1-diphosphate: step 7/9. The chain is Histidinol-phosphate aminotransferase (hisC) from Methylobacillus flagellatus.